Reading from the N-terminus, the 115-residue chain is uncharacterized protein (115 aa).

The first 20 residues, 1–20, serve as a signal peptide directing secretion; that stretch reads MKTFFRTVLFGSLMAVCANS.

This is an uncharacterized protein from Escherichia coli O6:H1 (strain CFT073 / ATCC 700928 / UPEC).